Consider the following 177-residue polypeptide: Protein YOP1 (177 aa).

Topologically, residues 1–35 (MADVISSLQTQLKELDTKFAGNNVLNQLEQRTNLP) are cytoplasmic. The chain crosses the membrane as a helical span at residues 36 to 55 (KSYLVVGSTIFYLLLIFINV). The Lumenal segment spans residues 56–57 (GG). Residues 58–78 (IGEILGNFAGFVIPAYYSILA) traverse the membrane as a helical segment. Over 79 to 88 (LKTTTTKDDT) the chain is Cytoplasmic. Residues 89 to 103 (QLLTYWIVFSFLNVI) traverse the membrane as a helical segment. Residues 104 to 108 (EFWSK) lie on the Lumenal side of the membrane. A helical transmembrane segment spans residues 109 to 127 (ALLYIIPFYWFLKTIFLLY). Residues 128–177 (IALPQTGGATMIYNRFISPLTDKYILGPKKTDGVQQSVKEASRATGAATH) lie on the Cytoplasmic side of the membrane.

Belongs to the DP1 family. Oligomer.

Its subcellular location is the endoplasmic reticulum membrane. It localises to the golgi apparatus membrane. Required to generate and maintain the structure of the tubular endoplasmic reticulum network and the vacuole. Induces high curvature in membranes and causes membrane tubule formation. Involved in membrane/vesicle trafficking. This Candida glabrata (strain ATCC 2001 / BCRC 20586 / JCM 3761 / NBRC 0622 / NRRL Y-65 / CBS 138) (Yeast) protein is Protein YOP1 (YOP1).